A 141-amino-acid polypeptide reads, in one-letter code: Large ribosomal subunit protein uL11 (141 aa).

It belongs to the universal ribosomal protein uL11 family. As to quaternary structure, part of the ribosomal stalk of the 50S ribosomal subunit. Interacts with L10 and the large rRNA to form the base of the stalk. L10 forms an elongated spine to which L12 dimers bind in a sequential fashion forming a multimeric L10(L12)X complex. One or more lysine residues are methylated.

Forms part of the ribosomal stalk which helps the ribosome interact with GTP-bound translation factors. This chain is Large ribosomal subunit protein uL11, found in Geobacillus kaustophilus (strain HTA426).